Reading from the N-terminus, the 536-residue chain is Glutamate--tRNA ligase, mitochondrial (536 aa).

48 to 50 (RFA) is an L-glutamate binding site. A 'HIGH' region motif is present at residues 53–61 (PTGFLHLGS). His58 is an ATP binding site. L-glutamate contacts are provided by residues Glu84, 235–239 (YHLAN), and Arg253. ATP-binding positions include Glu256 and 291 to 295 (KLSKR). Residues 291 to 295 (KLSKR) carry the 'KMSKS' region motif.

Belongs to the class-I aminoacyl-tRNA synthetase family. Glutamate--tRNA ligase type 1 subfamily.

The protein localises to the mitochondrion matrix. The enzyme catalyses tRNA(Glu) + L-glutamate + ATP = L-glutamyl-tRNA(Glu) + AMP + diphosphate. In terms of biological role, catalyzes the attachment of glutamate to tRNA(Glu) in a two-step reaction: glutamate is first activated by ATP to form Glu-AMP and then transferred to the acceptor end of tRNA(Glu). In Saccharomyces cerevisiae (strain ATCC 204508 / S288c) (Baker's yeast), this protein is Glutamate--tRNA ligase, mitochondrial (MSE1).